Here is a 92-residue protein sequence, read N- to C-terminus: Large ribosomal subunit protein bL28 (92 aa).

It belongs to the bacterial ribosomal protein bL28 family.

The sequence is that of Large ribosomal subunit protein bL28 from Borrelia garinii subsp. bavariensis (strain ATCC BAA-2496 / DSM 23469 / PBi) (Borreliella bavariensis).